The following is a 504-amino-acid chain: Maturase K (504 aa).

Belongs to the intron maturase 2 family. MatK subfamily.

It is found in the plastid. It localises to the chloroplast. In terms of biological role, usually encoded in the trnK tRNA gene intron. Probably assists in splicing its own and other chloroplast group II introns. The protein is Maturase K of Matthiola incana (Common stock).